The chain runs to 416 residues: cAMP-dependent protein kinase regulatory subunit (416 aa).

The dimerization and phosphorylation stretch occupies residues 2 to 183; sequence VSSLPKESQA…RLEKSIRNNF (182 aa). Phosphoserine is present on residues S3, S4, S9, S68, S70, S74, S77, S79, S81, S83, and S84. Residues 8–45 are dimerization/docking domain (D/D); the sequence is ESQAELQLFQNEINAANPSDFLQFSANYFNKRLEQQRA. The interval 65 to 138 is disordered; sequence PEESFSRPQS…TSTPPLPMHF (74 aa). Positions 70 to 84 are enriched in low complexity; the sequence is SRPQSAQSQSRSRSS. T129 is modified (phosphothreonine). Phosphoserine is present on S130. A phosphothreonine mark is found at T131 and T144. The short motif at 142 to 146 is the Inhibitor sequence (IS) element; that stretch reads RRTSV. At S145 the chain carries Phosphoserine; by autocatalysis. The residue at position 147 (S147) is a Phosphoserine. Residues T150 and T160 each carry the phosphothreonine modification. 3',5'-cyclic AMP is bound by residues 184–301, E249, R258, 302–416, E368, and R377; these read LFNK…KSMP and VLKS…PTRH.

The protein belongs to the cAMP-dependent kinase regulatory chain family. As to quaternary structure, the inactive holoenzyme of cAMP-dependent protein kinase is a tetramer, composed of 2 regulatory subunits (R, encoded by BCY1) and two catalytic subunits (C, encoded by the 3 partially redundant TPK1, TPK2, and TPK3 genes). Activation by cAMP causes dissociation of the holoenzyme, producing 2 active catalytic monomers C and a regulatory dimer R(2). Post-translationally, phosphorylated by YAK1 in response to glucose starvation. Phosphorylated by MCK1 at Thr-129 upon TOR complex 1 (TORC1) inhibition. Thr-129 phosphorylation activates BCY1 to inhibit PKA. TORC1 inhibits phosphorylation of RxxS/T sites but has no effect on Ser-145 phosphorylation. The phosphorylation sites can be clustered in several groups, all localized in the N-terminal part. The first cluster termed cluster I (CI) is located close to the N-terminus and includes Ser-3, Ser-4 and Ser-9. The second includes Ser-68, Ser-70, Ser-74, Ser-77, Ser-79, Ser-81, Ser-83, and Ser-84. This cluster of phosphorylation sites, termed cluster II (CII), is important for BCY1 cytoplasmic localization and function. The third cluster of phosphorylated residues consists of Thr-144, Ser-145, Ser-147, Thr-150, and Thr-160. This cluster falls within or near the so-called autoinhibitory domain where the catalytic subunit of PKA autophosphorylates the highly conserved Ser-145 to inhibit BCY1. A last cluster of phosphorylated residues included Thr-129, Ser-130, and Thr-131 and is termed cluster III (CIII). Sites in CIII (and to a lesser extent in CII) are hyperphosphorylated in response to rapamycin.

The protein localises to the cytoplasm. Its subcellular location is the nucleus. Functionally, regulatory subunit of the cyclic AMP-dependent protein kinase (PKA), an effector of the Ras/cAMP pathway. Inhibits PKA activity in the absence of cAMP. cAMP activates PKA and promotes growth and proliferation in response to good nutrient conditions. Together with ZDS1, provides a negative feedback control on the cell wall integrity-signaling pathway by acting as a negative regulator of MAP kinase SLT2/MPK1. In Saccharomyces cerevisiae (strain ATCC 204508 / S288c) (Baker's yeast), this protein is cAMP-dependent protein kinase regulatory subunit (BCY1).